Consider the following 695-residue polypeptide: DSC E3 ubiquitin ligase complex subunit 1 (695 aa).

Positions 1–25 (MDRRRWVPSTPVVTLLLLFMLFAPA) are cleaved as a signal peptide. Over 26-319 (PRLPSRNGES…KGPRNFVLEN (294 aa)) the chain is Lumenal. Residues 320–340 (HLVRFSSLYIFIVLSQIFVLL) traverse the membrane as a helical segment. The Cytoplasmic segment spans residues 341-353 (RQMRINSPSHVQR). The chain crosses the membrane as a helical span at residues 354-374 (LSFLTIAMQAGLDAYIAIFFL). Topologically, residues 375–382 (STNAVIEK) are lumenal. Residues 383–403 (GYLPFVSVAFLSLVPSVMFTM) traverse the membrane as a helical segment. The Cytoplasmic segment spans residues 404–486 (RYLALILRVQ…QRDWSAVCLR (83 aa)). The tract at residues 419–473 (PPAPRPVTNNSSNNNTNQSNASNENSPNAPSAANDNTETTTVNPPQEDDQPMTQH) is disordered. The segment covering 427 to 454 (NNSSNNNTNQSNASNENSPNAPSAANDN) has biased composition (low complexity). A helical transmembrane segment spans residues 487–507 (FYFIILVVCIASLYSAFWPVI). Over 508–509 (YR) the chain is Lumenal. The helical transmembrane segment at 510 to 530 (FYFISALIFTSYSFWIPQIIQ) threads the bilayer. At 531–540 (NVKQGTSRSF) the chain is on the cytoplasmic side. The helical transmembrane segment at 541–561 (TWTYILGASVLRLYLPLAIFI) threads the bilayer. Over 562–572 (DSELILGFPPK) the chain is Lumenal. The chain crosses the membrane as a helical span at residues 573–593 (YFFALGLVLWMLFQVLVLLVQ). The Cytoplasmic portion of the chain corresponds to 594-695 (DTLGPRFFLP…PVCRCHLPAV (102 aa)). Residues 634-689 (CPICMQPIELVSTGSTLNPASMMVRRNYMLTPCHHLYHRQCLLQWMETRSICPVCR) form an RING-type; atypical zinc finger.

In terms of assembly, component of the DSC E3 ubiquitin ligase complex composed of dsc1, dsc2, dsc3 and dsc4.

The protein localises to the endoplasmic reticulum membrane. Its subcellular location is the golgi apparatus membrane. The enzyme catalyses S-ubiquitinyl-[E2 ubiquitin-conjugating enzyme]-L-cysteine + [acceptor protein]-L-lysine = [E2 ubiquitin-conjugating enzyme]-L-cysteine + N(6)-ubiquitinyl-[acceptor protein]-L-lysine.. It participates in protein modification; protein ubiquitination. In terms of biological role, catalytic component of the DSC E3 ubiquitin ligase complex which is required for the sre1 transcriptional activator proteolytic cleavage to release the soluble transcription factor from the membrane in low oxygen or sterol conditions. The complex also plays an important role in the multivesicular body (MVB) pathway and functions in a post-endoplasmic reticulum pathway for protein degradation. The sequence is that of DSC E3 ubiquitin ligase complex subunit 1 (dsc1) from Schizosaccharomyces pombe (strain 972 / ATCC 24843) (Fission yeast).